Consider the following 303-residue polypeptide: UDP-3-O-acyl-N-acetylglucosamine deacetylase (303 aa).

Zn(2+)-binding residues include His78, His237, and Asp241. The active-site Proton donor is the His264.

Belongs to the LpxC family. Zn(2+) is required as a cofactor.

It carries out the reaction a UDP-3-O-[(3R)-3-hydroxyacyl]-N-acetyl-alpha-D-glucosamine + H2O = a UDP-3-O-[(3R)-3-hydroxyacyl]-alpha-D-glucosamine + acetate. The protein operates within glycolipid biosynthesis; lipid IV(A) biosynthesis; lipid IV(A) from (3R)-3-hydroxytetradecanoyl-[acyl-carrier-protein] and UDP-N-acetyl-alpha-D-glucosamine: step 2/6. Catalyzes the hydrolysis of UDP-3-O-myristoyl-N-acetylglucosamine to form UDP-3-O-myristoylglucosamine and acetate, the committed step in lipid A biosynthesis. This is UDP-3-O-acyl-N-acetylglucosamine deacetylase from Teredinibacter turnerae (strain ATCC 39867 / T7901).